The following is a 940-amino-acid chain: Glutamate receptor 2.9 (940 aa).

The N-terminal stretch at M1–G23 is a signal peptide. Over Q24–S566 the chain is Extracellular. 6 N-linked (GlcNAc...) asparagine glycosylation sites follow: N25, N39, N115, N338, N345, and N528. Residues L567–F587 traverse the membrane as a helical segment. Topologically, residues E588 to R596 are cytoplasmic. The chain crosses the membrane as a helical span at residues G597–A617. Residues H618–R628 are Cytoplasmic-facing. A helical transmembrane segment spans residues F629–L649. Residues T650–G811 lie on the Extracellular side of the membrane. N-linked (GlcNAc...) asparagine glycosylation is found at N771, N776, and N805. The chain crosses the membrane as a helical span at residues L812 to L832. At Y833–Q940 the chain is on the cytoplasmic side. Disordered stretches follow at residues I876 to S900 and P914 to Q940.

This sequence belongs to the glutamate-gated ion channel (TC 1.A.10.1) family. As to quaternary structure, may form heteromers. Expressed predominantly in roots.

Its subcellular location is the membrane. Glutamate-gated receptor that probably acts as a non-selective cation channel. May be involved in light-signal transduction and calcium homeostasis via the regulation of calcium influx into cells. The sequence is that of Glutamate receptor 2.9 (GLR2.9) from Arabidopsis thaliana (Mouse-ear cress).